A 486-amino-acid polypeptide reads, in one-letter code: 23S rRNA (uracil(1939)-C(5))-methyltransferase RlmD (486 aa).

The TRAM domain occupies 14–76 (AAQDGSGLPE…NHWEQANLTA (63 aa)). 4 residues coordinate [4Fe-4S] cluster: Cys89, Cys99, Cys102, and Cys181. Residues Gln289, Phe318, Asn323, Glu339, Asn374, and Asp395 each contribute to the S-adenosyl-L-methionine site. Cys442 acts as the Nucleophile in catalysis.

The protein belongs to the class I-like SAM-binding methyltransferase superfamily. RNA M5U methyltransferase family. RlmD subfamily.

It carries out the reaction uridine(1939) in 23S rRNA + S-adenosyl-L-methionine = 5-methyluridine(1939) in 23S rRNA + S-adenosyl-L-homocysteine + H(+). Functionally, catalyzes the formation of 5-methyl-uridine at position 1939 (m5U1939) in 23S rRNA. This is 23S rRNA (uracil(1939)-C(5))-methyltransferase RlmD from Verminephrobacter eiseniae (strain EF01-2).